A 482-amino-acid polypeptide reads, in one-letter code: UDP-N-acetylmuramate--L-alanine ligase (482 aa).

119–125 contributes to the ATP binding site; the sequence is GTHGKTT.

It belongs to the MurCDEF family.

It is found in the cytoplasm. It catalyses the reaction UDP-N-acetyl-alpha-D-muramate + L-alanine + ATP = UDP-N-acetyl-alpha-D-muramoyl-L-alanine + ADP + phosphate + H(+). Its pathway is cell wall biogenesis; peptidoglycan biosynthesis. Cell wall formation. The protein is UDP-N-acetylmuramate--L-alanine ligase of Cyanothece sp. (strain PCC 7425 / ATCC 29141).